The chain runs to 147 residues: Ribonuclease H (147 aa).

Positions 1 to 142 (MTEIVEIFTD…ADALARSAIT (142 aa)) constitute an RNase H type-1 domain. Positions 10, 48, 70, and 134 each coordinate Mg(2+).

Belongs to the RNase H family. As to quaternary structure, monomer. It depends on Mg(2+) as a cofactor.

It localises to the cytoplasm. It carries out the reaction Endonucleolytic cleavage to 5'-phosphomonoester.. Endonuclease that specifically degrades the RNA of RNA-DNA hybrids. This Nitrosococcus oceani (strain ATCC 19707 / BCRC 17464 / JCM 30415 / NCIMB 11848 / C-107) protein is Ribonuclease H.